A 37-amino-acid polypeptide reads, in one-letter code: Neuropeptide Y2-like conopeptide (37 aa).

Tyrosine 37 is modified (tyrosine amide).

It belongs to the NPY family. In terms of tissue distribution, expressed by the venom duct.

The protein resides in the secreted. Causes hyperactivity such as jumping, rapid circling and tail flicking, after intraventicular injection into mouse brain. The sequence is that of Neuropeptide Y2-like conopeptide from Conus betulinus (Beech cone).